We begin with the raw amino-acid sequence, 462 residues long: EPD1-interacting receptor-like cytoplasmic serine/threonine-protein kinase 5A (462 aa).

Positions 85 to 366 (FSSANFLGEG…DVVNILEPLL (282 aa)) constitute a Protein kinase domain. ATP-binding positions include 91–99 (LGEGGFGPV) and Lys120. Phosphotyrosine is present on residues Tyr165 and Tyr167. Asp215 functions as the Proton acceptor in the catalytic mechanism.

It belongs to the protein kinase superfamily. Ser/Thr protein kinase family. In terms of assembly, interacts with the Verticillium dahliae elicitor EPD1 (AC G2WWH6). In terms of processing, phosphorylated at Tyr-165 and Tyr-167 in the presence of pathogen-associated molecular patterns (PAMPs); this triggers the expression of pathogenesis-related genes (e.g. PR5 and PR16). As to expression, mostly expressed in roots and, to a lesser extent, in leaves.

Its subcellular location is the cell membrane. It catalyses the reaction L-seryl-[protein] + ATP = O-phospho-L-seryl-[protein] + ADP + H(+). The enzyme catalyses L-threonyl-[protein] + ATP = O-phospho-L-threonyl-[protein] + ADP + H(+). Required for pathogen-associated molecular pattern (PAMP, e.g. chitin and flg22)-triggered immunity (PTI) involving reactive oxygen species (ROS) accumulation and triggering plant defense, including defense-related gene expression (e.g. PR1 and LOX). Ensures specific recognition of the EPD1 effector of Verticillium dahliae, resulting in a hypersensitive response known as effector-triggered immunity (ETI), characterized by the activation of programmed cell death to limit infection by the pathogen. Priming plants with the incompatible pathogen V.dahliae leads to an increased resistance to compatible pathogens, as a result of systemic acquired resistance (SAR). This chain is EPD1-interacting receptor-like cytoplasmic serine/threonine-protein kinase 5A, found in Gossypium barbadense (Sea Island cotton).